A 196-amino-acid polypeptide reads, in one-letter code: DnaA initiator-associating protein DiaA (196 aa).

In terms of domain architecture, SIS spans 34–196; it reads MVQSLLNGNK…DNTLFPHQND (163 aa).

It belongs to the SIS family. DiaA subfamily. Homotetramer; dimer of dimers.

Its function is as follows. Required for the timely initiation of chromosomal replication via direct interactions with the DnaA initiator protein. The sequence is that of DnaA initiator-associating protein DiaA from Pectobacterium carotovorum subsp. carotovorum (strain PC1).